The following is a 301-amino-acid chain: Large ribosomal subunit protein uL18y (301 aa).

The segment at 247 to 267 (RAEPNHKKTEKSAPKEHKRYN) is disordered. Positions 249–261 (EPNHKKTEKSAPK) are enriched in basic and acidic residues.

This sequence belongs to the universal ribosomal protein uL18 family. In terms of assembly, component of the large ribosomal subunit (LSU).

The protein resides in the cytoplasm. It localises to the nucleus. The protein localises to the nucleolus. It is found in the nucleoplasm. Its function is as follows. Component of the ribosome, a large ribonucleoprotein complex responsible for the synthesis of proteins in the cell. The small ribosomal subunit (SSU) binds messenger RNAs (mRNAs) and translates the encoded message by selecting cognate aminoacyl-transfer RNA (tRNA) molecules. The large subunit (LSU) contains the ribosomal catalytic site termed the peptidyl transferase center (PTC), which catalyzes the formation of peptide bonds, thereby polymerizing the amino acids delivered by tRNAs into a polypeptide chain. The nascent polypeptides leave the ribosome through a tunnel in the LSU and interact with protein factors that function in enzymatic processing, targeting, and the membrane insertion of nascent chains at the exit of the ribosomal tunnel. Seems involved in the regulation of cell proliferation. Essential in leaf polarity establishment, probably having a role for translation in leaf dorsoventral patterning to specify leaf adaxial identity. This Arabidopsis thaliana (Mouse-ear cress) protein is Large ribosomal subunit protein uL18y.